The following is a 370-amino-acid chain: 3-isopropylmalate dehydrogenase (370 aa).

77–90 (GPKWDSVPYEVRPE) lines the NAD(+) pocket. Arg97, Arg107, Arg135, and Asp226 together coordinate substrate. Mg(2+)-binding residues include Asp226, Asp250, and Asp254. 290 to 302 (GSAPDIAGKGIAN) is a binding site for NAD(+).

It belongs to the isocitrate and isopropylmalate dehydrogenases family. LeuB type 1 subfamily. In terms of assembly, homodimer. Requires Mg(2+) as cofactor. Mn(2+) is required as a cofactor.

It is found in the cytoplasm. It catalyses the reaction (2R,3S)-3-isopropylmalate + NAD(+) = 4-methyl-2-oxopentanoate + CO2 + NADH. It functions in the pathway amino-acid biosynthesis; L-leucine biosynthesis; L-leucine from 3-methyl-2-oxobutanoate: step 3/4. Catalyzes the oxidation of 3-carboxy-2-hydroxy-4-methylpentanoate (3-isopropylmalate) to 3-carboxy-4-methyl-2-oxopentanoate. The product decarboxylates to 4-methyl-2 oxopentanoate. The sequence is that of 3-isopropylmalate dehydrogenase from Brucella abortus (strain 2308).